The following is a 503-amino-acid chain: ATP synthase subunit beta (503 aa).

Residue 157 to 164 (GGAGVGKT) participates in ATP binding.

This sequence belongs to the ATPase alpha/beta chains family. In terms of assembly, F-type ATPases have 2 components, CF(1) - the catalytic core - and CF(0) - the membrane proton channel. CF(1) has five subunits: alpha(3), beta(3), gamma(1), delta(1), epsilon(1). CF(0) has three main subunits: a(1), b(2) and c(9-12). The alpha and beta chains form an alternating ring which encloses part of the gamma chain. CF(1) is attached to CF(0) by a central stalk formed by the gamma and epsilon chains, while a peripheral stalk is formed by the delta and b chains.

It is found in the cell inner membrane. The catalysed reaction is ATP + H2O + 4 H(+)(in) = ADP + phosphate + 5 H(+)(out). Produces ATP from ADP in the presence of a proton gradient across the membrane. The catalytic sites are hosted primarily by the beta subunits. This Flavobacterium psychrophilum (strain ATCC 49511 / DSM 21280 / CIP 103535 / JIP02/86) protein is ATP synthase subunit beta.